The primary structure comprises 86 residues: Small ribosomal subunit protein bS20 (86 aa).

The disordered stretch occupies residues 1-25 (MANIKSQIKRNKQNEKRHERNKAVK). Basic and acidic residues predominate over residues 12 to 22 (KQNEKRHERNK).

Belongs to the bacterial ribosomal protein bS20 family.

In terms of biological role, binds directly to 16S ribosomal RNA. The polypeptide is Small ribosomal subunit protein bS20 (Nocardioides sp. (strain ATCC BAA-499 / JS614)).